Reading from the N-terminus, the 296-residue chain is Phosphatidylcholine:diacylglycerol cholinephosphotransferase 2 (296 aa).

Transmembrane regions (helical) follow at residues 83–103, 136–156, 165–182, 198–218, and 250–270; these read HWIPCLFAAGVMFFTVVEYTF, VLAALNTILVGMQTTYIGCTW, TIAALFMFTCRGILGYST, PVGNVSFFLFYSGHVAGSMIA, and GHYTIDIAVGVGAGILFDSLA. Active-site residues include H211, H251, and D255.

Belongs to the phosphatidylcholine:diacylglycerol cholinephosphotransferase family.

The protein resides in the membrane. Functionally, functions as a phosphatidylcholine:diacylglycerol cholinephosphotransferase that catalyzes the transfer of the phosphocholine headgroup from phosphatidylcholine (PC) to diacylglycerol, a major reaction for the transfer of 18:1 into phosphatidylcholine for desaturation and also for the reverse transfer of 18:2 and 18:3 into the triacylglycerols synthesis pathway. This chain is Phosphatidylcholine:diacylglycerol cholinephosphotransferase 2, found in Arabidopsis thaliana (Mouse-ear cress).